A 473-amino-acid polypeptide reads, in one-letter code: Photosystem II CP43 reaction center protein (473 aa).

Residues 1–14 (MKTLYSLRRFYHVE) constitute a propeptide that is removed on maturation. Threonine 15 carries the post-translational modification N-acetylthreonine. Position 15 is a phosphothreonine (threonine 15). 5 helical membrane passes run 69–93 (LFEV…PHLA), 134–155 (LIGP…KDKN), 178–200 (KACY…RIIT), 255–275 (KPWA…LSYS), and 291–312 (WFNN…ASQA). Glutamate 367 serves as a coordination point for [CaMn4O5] cluster. A helical membrane pass occupies residues 447–471 (RARAAAAGFEKGIERETEPVLFMKP).

It belongs to the PsbB/PsbC family. PsbC subfamily. PSII is composed of 1 copy each of membrane proteins PsbA, PsbB, PsbC, PsbD, PsbE, PsbF, PsbH, PsbI, PsbJ, PsbK, PsbL, PsbM, PsbT, PsbX, PsbY, PsbZ, Psb30/Ycf12, at least 3 peripheral proteins of the oxygen-evolving complex and a large number of cofactors. It forms dimeric complexes. Binds multiple chlorophylls and provides some of the ligands for the Ca-4Mn-5O cluster of the oxygen-evolving complex. It may also provide a ligand for a Cl- that is required for oxygen evolution. PSII binds additional chlorophylls, carotenoids and specific lipids. serves as cofactor.

The protein localises to the plastid. Its subcellular location is the chloroplast thylakoid membrane. One of the components of the core complex of photosystem II (PSII). It binds chlorophyll and helps catalyze the primary light-induced photochemical processes of PSII. PSII is a light-driven water:plastoquinone oxidoreductase, using light energy to abstract electrons from H(2)O, generating O(2) and a proton gradient subsequently used for ATP formation. This Mesostigma viride (Green alga) protein is Photosystem II CP43 reaction center protein.